The primary structure comprises 103 residues: Large ribosomal subunit protein uL24 (103 aa).

This sequence belongs to the universal ribosomal protein uL24 family. In terms of assembly, part of the 50S ribosomal subunit.

Its function is as follows. One of two assembly initiator proteins, it binds directly to the 5'-end of the 23S rRNA, where it nucleates assembly of the 50S subunit. Functionally, one of the proteins that surrounds the polypeptide exit tunnel on the outside of the subunit. This is Large ribosomal subunit protein uL24 from Lacticaseibacillus casei (strain BL23) (Lactobacillus casei).